The chain runs to 285 residues: ATP phosphoribosyltransferase (285 aa).

This sequence belongs to the ATP phosphoribosyltransferase family. Long subfamily. Requires Mg(2+) as cofactor.

The protein resides in the cytoplasm. It carries out the reaction 1-(5-phospho-beta-D-ribosyl)-ATP + diphosphate = 5-phospho-alpha-D-ribose 1-diphosphate + ATP. It functions in the pathway amino-acid biosynthesis; L-histidine biosynthesis; L-histidine from 5-phospho-alpha-D-ribose 1-diphosphate: step 1/9. Its activity is regulated as follows. Feedback inhibited by histidine. Catalyzes the condensation of ATP and 5-phosphoribose 1-diphosphate to form N'-(5'-phosphoribosyl)-ATP (PR-ATP). Has a crucial role in the pathway because the rate of histidine biosynthesis seems to be controlled primarily by regulation of HisG enzymatic activity. The polypeptide is ATP phosphoribosyltransferase (Streptomyces avermitilis (strain ATCC 31267 / DSM 46492 / JCM 5070 / NBRC 14893 / NCIMB 12804 / NRRL 8165 / MA-4680)).